The sequence spans 232 residues: GTP cyclohydrolase III (232 aa).

It belongs to the archaeal-type GTP cyclohydrolase family.

The catalysed reaction is GTP + 3 H2O = 2-amino-5-formylamino-6-(5-phospho-D-ribosylamino)pyrimidin-4(3H)-one + 2 phosphate + 2 H(+). Its function is as follows. Catalyzes the formation of 2-amino-5-formylamino-6-ribofuranosylamino-4(3H)-pyrimidinone ribonucleotide monophosphate and inorganic phosphate from GTP. Also has an independent pyrophosphate phosphohydrolase activity. The polypeptide is GTP cyclohydrolase III (Saccharolobus islandicus (strain Y.G.57.14 / Yellowstone #1) (Sulfolobus islandicus)).